A 257-amino-acid polypeptide reads, in one-letter code: MGVRVKRFDLVRVKDSEAYKDSDFVAVEEPLNIRTCFEKCEDFAIIMRTPGDDKELSLGFLYSEGVINSIHDVEDIKQVENNVIEVKLNKPIGIRIRELIVNSSCGVCGRAFLYTLNILKSDLKVKREVIFSFPEKLREKQSVFNISGGLHATALFNPQGELLFIYEDVGRHNAVDKVVGRLLLEDKIPASNYIMQVSGRLGYEIVSKGIKAGIPIICGISAPTSLAIEIAEEAGLTLIGFLRGKSLNIYTHSERIY.

The active-site Cysteine persulfide intermediate is C105.

The protein belongs to the FdhD family.

The protein localises to the cytoplasm. Functionally, required for formate dehydrogenase (FDH) activity. Acts as a sulfur carrier protein that transfers sulfur from IscS to the molybdenum cofactor prior to its insertion into FDH. This chain is Sulfur carrier protein FdhD, found in Saccharolobus solfataricus (strain ATCC 35092 / DSM 1617 / JCM 11322 / P2) (Sulfolobus solfataricus).